The chain runs to 166 residues: MFDWIHGNSRLPIALSIVELLVDMDCKGCEKKVRRAISKLDGVDTVEIDVDRQKVTVTGYVDREEVLKMVKRTGRTAEYWPFPYNGYYGDYYTYPSQHLEQSDQKIYQTISYSGKYDFYDVDDFQNTNNSTINGYYPSSSQKVQPNIDENALHLFSDDNAHACTIM.

Positions 15-78 (LSIVELLVDM…MVKRTGRTAE (64 aa)) constitute an HMA domain. A metal cation-binding residues include Cys-26 and Cys-29. Cys-163 bears the Cysteine methyl ester mark. Cys-163 carries the S-farnesyl cysteine lipid modification. Residues 164–166 (TIM) constitute a propeptide, removed in mature form.

This sequence belongs to the HIPP family.

Heavy-metal-binding protein. The protein is Heavy metal-associated isoprenylated plant protein 45 of Arabidopsis thaliana (Mouse-ear cress).